Consider the following 178-residue polypeptide: Gamma-crystallin S (178 aa).

Position 2 is an N-acetylserine (serine 2). An N-terminal arm region spans residues 2-5; the sequence is SKTG. Beta/gamma crystallin 'Greek key' domains follow at residues 6–44 and 45–87; these read TKITFYEDKNFQGRRYDCDCDCADFHTYLSRCNSIKVEG and GTWA…RAVH. Residues 88 to 93 are connecting peptide; the sequence is LPSGGQ. 2 Beta/gamma crystallin 'Greek key' domains span residues 94-134 and 135-177; these read YKIQ…KVLE and GVWI…RRIV.

The protein belongs to the beta/gamma-crystallin family. Monomer.

In terms of biological role, crystallins are the dominant structural components of the vertebrate eye lens. In Homo sapiens (Human), this protein is Gamma-crystallin S (CRYGS).